A 353-amino-acid polypeptide reads, in one-letter code: Photosystem II D2 protein (353 aa).

N-acetylthreonine is present on threonine 2. The residue at position 2 (threonine 2) is a Phosphothreonine. Residues 41-61 (CAYFALGGWFTGTTFVTSWYT) form a helical membrane-spanning segment. Histidine 118 serves as a coordination point for chlorophyll a. A helical transmembrane segment spans residues 125 to 141 (GFMLRQFELARSVQLRP). Pheophytin a-binding residues include glutamine 130 and asparagine 143. Residues 153–166 (VFVSVFLIYPLGQS) form a helical membrane-spanning segment. Histidine 198 is a chlorophyll a binding site. A helical membrane pass occupies residues 208 to 228 (AALLCAIHGATVENTLFEDGD). The a plastoquinone site is built by histidine 215 and phenylalanine 262. Residue histidine 215 coordinates Fe cation. Histidine 269 lines the Fe cation pocket. Residues 279–295 (GLWMSALGVVGLALNLR) traverse the membrane as a helical segment.

This sequence belongs to the reaction center PufL/M/PsbA/D family. As to quaternary structure, PSII is composed of 1 copy each of membrane proteins PsbA, PsbB, PsbC, PsbD, PsbE, PsbF, PsbH, PsbI, PsbJ, PsbK, PsbL, PsbM, PsbT, PsbX, PsbY, PsbZ, Psb30/Ycf12, at least 3 peripheral proteins of the oxygen-evolving complex and a large number of cofactors. It forms dimeric complexes. The D1/D2 heterodimer binds P680, chlorophylls that are the primary electron donor of PSII, and subsequent electron acceptors. It shares a non-heme iron and each subunit binds pheophytin, quinone, additional chlorophylls, carotenoids and lipids. There is also a Cl(-1) ion associated with D1 and D2, which is required for oxygen evolution. The PSII complex binds additional chlorophylls, carotenoids and specific lipids. serves as cofactor.

The protein resides in the plastid. Its subcellular location is the chloroplast thylakoid membrane. The catalysed reaction is 2 a plastoquinone + 4 hnu + 2 H2O = 2 a plastoquinol + O2. Functionally, photosystem II (PSII) is a light-driven water:plastoquinone oxidoreductase that uses light energy to abstract electrons from H(2)O, generating O(2) and a proton gradient subsequently used for ATP formation. It consists of a core antenna complex that captures photons, and an electron transfer chain that converts photonic excitation into a charge separation. The D1/D2 (PsbA/PsbD) reaction center heterodimer binds P680, the primary electron donor of PSII as well as several subsequent electron acceptors. D2 is needed for assembly of a stable PSII complex. The protein is Photosystem II D2 protein of Pelargonium hortorum (Common geranium).